Consider the following 255-residue polypeptide: NAD kinase (255 aa).

The active-site Proton acceptor is the D44. NAD(+) contacts are provided by residues 44–45, H49, 114–115, D144, A152, 155–160, and Q216; these read DG, NE, and SAYNLS.

The protein belongs to the NAD kinase family. A divalent metal cation serves as cofactor.

It is found in the cytoplasm. The enzyme catalyses NAD(+) + ATP = ADP + NADP(+) + H(+). In terms of biological role, involved in the regulation of the intracellular balance of NAD and NADP, and is a key enzyme in the biosynthesis of NADP. Catalyzes specifically the phosphorylation on 2'-hydroxyl of the adenosine moiety of NAD to yield NADP. The sequence is that of NAD kinase from Rickettsia prowazekii (strain Madrid E).